The chain runs to 465 residues: UDP-N-acetylmuramoylalanine--D-glutamate ligase (465 aa).

127–133 (GSNGKST) is a binding site for ATP.

It belongs to the MurCDEF family.

The protein localises to the cytoplasm. It carries out the reaction UDP-N-acetyl-alpha-D-muramoyl-L-alanine + D-glutamate + ATP = UDP-N-acetyl-alpha-D-muramoyl-L-alanyl-D-glutamate + ADP + phosphate + H(+). It functions in the pathway cell wall biogenesis; peptidoglycan biosynthesis. Cell wall formation. Catalyzes the addition of glutamate to the nucleotide precursor UDP-N-acetylmuramoyl-L-alanine (UMA). This is UDP-N-acetylmuramoylalanine--D-glutamate ligase from Cereibacter sphaeroides (strain KD131 / KCTC 12085) (Rhodobacter sphaeroides).